The sequence spans 920 residues: Plasma membrane ATPase (920 aa).

Positions 1–11 are enriched in basic and acidic residues; sequence MSDERITEKPP. Residues 1–71 are disordered; it reads MSDERITEKP…AEEDDGPAAA (71 aa). Topologically, residues 1–117 are cytoplasmic; it reads MSDERITEKP…REESENLLVK (117 aa). A compositionally biased stretch (acidic residues) spans 17–50; it reads SEGEPVPEEEVEEETEEEVPDEQSSEDDDIDGLI. The chain crosses the membrane as a helical span at residues 118-138; the sequence is FLMFFIGPIQFVMEAAAVLAA. The Extracellular portion of the chain corresponds to 139–142; sequence GLED. The chain crosses the membrane as a helical span at residues 143–162; it reads WVDFGVICGLLFLNAGVGFI. At 163-293 the chain is on the cytoplasmic side; that stretch reads QEFQAGSIVE…GQGHFTEVLN (131 aa). The chain crosses the membrane as a helical span at residues 294 to 315; it reads GIGVILLVLVVITLLLIWTACF. The Extracellular portion of the chain corresponds to 316–326; the sequence is YRTVRIVPILR. Residues 327–349 form a helical membrane-spanning segment; that stretch reads YTLGITIVGVPVGLPAVVTTTMA. The Cytoplasmic portion of the chain corresponds to 350–721; it reads GGAAYLAKKQ…IAILNHSLDI (372 aa). Asp-380 functions as the 4-aspartylphosphate intermediate in the catalytic mechanism. Residues Asp-636 and Asp-640 each coordinate Mg(2+). The chain crosses the membrane as a helical span at residues 722–740; it reads DLIVFIAIFADVATLAIAY. The Extracellular portion of the chain corresponds to 741 to 756; that stretch reads DNAPFSPSPVKWNLPR. Residues 757-776 traverse the membrane as a helical segment; the sequence is LWGMSIMMGIILAAGTWITL. The Cytoplasmic portion of the chain corresponds to 777–826; it reads TTMFLPKGGIIQNFGSIDGILFLEISLTENWLIFITRAVGPFWSSIPSWQ. The helical transmembrane segment at 827–847 threads the bilayer; sequence LAGAVFVVDVVATMFTLFGWW. Residues 848–859 lie on the Extracellular side of the membrane; that stretch reads SQNWTDIVTVVR. The helical transmembrane segment at 860–876 threads the bilayer; the sequence is IYIWSIGIFCCLGGAYY. Residues 877–920 are Cytoplasmic-facing; it reads LMSESETFDRLMNGKPLKENKSTRSVEDFLASMRRVSTQHEKGN.

The protein belongs to the cation transport ATPase (P-type) (TC 3.A.3) family. Type IIIA subfamily.

The protein resides in the cell membrane. It carries out the reaction ATP + H2O + H(+)(in) = ADP + phosphate + 2 H(+)(out). In terms of biological role, the plasma membrane ATPase of plants and fungi is a hydrogen ion pump. The proton gradient it generates drives the active transport of nutrients by H(+)-symport. The resulting external acidification and/or internal alkinization may mediate growth responses. In Zygosaccharomyces rouxii, this protein is Plasma membrane ATPase.